Reading from the N-terminus, the 196-residue chain is Dual-action ribosomal maturation protein DarP (196 aa).

This sequence belongs to the DarP family.

It localises to the cytoplasm. Member of a network of 50S ribosomal subunit biogenesis factors which assembles along the 30S-50S interface, preventing incorrect 23S rRNA structures from forming. Promotes peptidyl transferase center (PTC) maturation. This Stenotrophomonas maltophilia (strain R551-3) protein is Dual-action ribosomal maturation protein DarP.